The following is a 346-amino-acid chain: Galanin receptor type 1 (346 aa).

Topologically, residues 1 to 33 (MELAPVNLSEGNGSDPEPPAEPRPLFGIGVENF) are extracellular. Asparagine 7 and asparagine 12 each carry an N-linked (GlcNAc...) asparagine glycan. A helical transmembrane segment spans residues 34–54 (ITLVVFGLIFAMGVLGNSLVI). Over 55 to 69 (TVLARSKPGKPRSTT) the chain is Cytoplasmic. The helical transmembrane segment at 70-90 (NLFILNLSIADLAYLLFCIPF) threads the bilayer. At 91 to 108 (QATVYALPTWVLGAFICK) the chain is on the extracellular side. Cysteine 107 and cysteine 185 are oxidised to a cystine. A helical membrane pass occupies residues 109 to 130 (FIHYFFTVSMLVSIFTLAAMSV). The Cytoplasmic segment spans residues 131 to 150 (DRYVAIVHSRRSSSLRVSRN). Residues 151-171 (ALLGVGFIWALSIAMASPVAY) traverse the membrane as a helical segment. Residues 172 to 196 (YQRLFHRDSNQTFCWEHWPNQLHKK) are Extracellular-facing. Asparagine 181 carries N-linked (GlcNAc...) asparagine glycosylation. Residues 197-217 (AYVVCTFVFGYLLPLLLICFC) traverse the membrane as a helical segment. The Cytoplasmic segment spans residues 218–246 (YAKVLNHLHKKLKNMSKKSEASKKKTAQT). A helical membrane pass occupies residues 247 to 267 (VLVVVVVFGISWLPHHVIHLW). The Extracellular portion of the chain corresponds to 268 to 269 (AE). Residues 270–290 (FGAFPLTPASFFFRITAHCLA) traverse the membrane as a helical segment. Residues 291–346 (YSNSSVNPIIYAFLSENFRKAYKQVFKCRVCNESPHGDAKEKNRIDTPPSTNCTHV) lie on the Cytoplasmic side of the membrane. A lipid anchor (S-palmitoyl cysteine) is attached at cysteine 318. Basic and acidic residues predominate over residues 326-335 (HGDAKEKNRI). Residues 326–346 (HGDAKEKNRIDTPPSTNCTHV) form a disordered region.

The protein belongs to the G-protein coupled receptor 1 family. In terms of assembly, interacts with GRP39 AND HTR1A. Post-translationally, three cysteine residues are found in the C-terminus, at least one of which may be palmitoylated. As to expression, spinal cord, small intestine, Rin14B insulinoma cells and several brain regions, particularly ventral hippocampus, amygdala, supraoptic nucleus, hypothalamus, thalamus, lateral parabrachial nucleus and locus coeruleus.

It is found in the cell membrane. Its function is as follows. Receptor for the hormone galanin. The activity of this receptor is mediated by G proteins that inhibit adenylate cyclase activity. The chain is Galanin receptor type 1 (Galr1) from Rattus norvegicus (Rat).